The chain runs to 319 residues: MNQLDYIKKFTNVVIDSGNIKYIKKYSPKDVTTNPSLILRESKSKHYYPLLMDAISYAKKKGGNLNSYIINANDKLLVNIGREILKIIDGRISIEIDVRLSFSYLDLIIRAKKIISLYNSYGIENNRILIKIAATWEGIQAAKFLEKSGINCNLTLIFSLVQAIACAESNVYLISPFVGRVNDWYIKNFKLNKNSKIDPGVKLVYKIFYFYQKYGYKTFVMGASFRNIDQIISIIGCDAITISPDFVNKLNNLKLKKIKNFIRVNLESKIKKNKLLEKEFRWKFNQNFMAVEKLSEGIRLFLRDQKKIDSFFLKKFKSG.

Lysine 131 acts as the Schiff-base intermediate with substrate in catalysis.

Belongs to the transaldolase family. Type 1 subfamily. As to quaternary structure, homodimer.

The protein resides in the cytoplasm. It catalyses the reaction D-sedoheptulose 7-phosphate + D-glyceraldehyde 3-phosphate = D-erythrose 4-phosphate + beta-D-fructose 6-phosphate. The protein operates within carbohydrate degradation; pentose phosphate pathway; D-glyceraldehyde 3-phosphate and beta-D-fructose 6-phosphate from D-ribose 5-phosphate and D-xylulose 5-phosphate (non-oxidative stage): step 2/3. Its function is as follows. Transaldolase is important for the balance of metabolites in the pentose-phosphate pathway. This chain is Transaldolase, found in Wigglesworthia glossinidia brevipalpis.